A 493-amino-acid chain; its full sequence is ATP-dependent rRNA helicase RRP3 (493 aa).

2 stretches are compositionally biased toward basic and acidic residues: residues A26 to E42 and E51 to K62. The interval A26–E68 is disordered. Residues E73–A101 carry the Q motif motif. Residues I104 to C276 enclose the Helicase ATP-binding domain. A117–T124 lines the ATP pocket. The DEAD box signature appears at D223 to D226. Residues L307–V453 form the Helicase C-terminal domain. The tract at residues R467–K493 is disordered. Residues M483–K493 are compositionally biased toward basic and acidic residues.

This sequence belongs to the DEAD box helicase family. DDX47/RRP3 subfamily. As to quaternary structure, interacts with the SSU processome.

The protein localises to the nucleus. It carries out the reaction ATP + H2O = ADP + phosphate + H(+). ATP-dependent rRNA helicase required for pre-ribosomal RNA processing. Involved in the maturation of the 35S-pre-rRNA and to its cleavage to mature 18S rRNA. This chain is ATP-dependent rRNA helicase RRP3, found in Candida glabrata (strain ATCC 2001 / BCRC 20586 / JCM 3761 / NBRC 0622 / NRRL Y-65 / CBS 138) (Yeast).